The following is a 378-amino-acid chain: Erythronate-4-phosphate dehydrogenase (378 aa).

Positions 45 and 66 each coordinate substrate. NAD(+) is bound by residues Asp146 and Thr175. Residue Arg208 is part of the active site. Asp232 contacts NAD(+). Glu237 is an active-site residue. Catalysis depends on His254, which acts as the Proton donor. Position 257 (Gly257) interacts with NAD(+). Tyr258 contacts substrate.

This sequence belongs to the D-isomer specific 2-hydroxyacid dehydrogenase family. PdxB subfamily. In terms of assembly, homodimer.

Its subcellular location is the cytoplasm. It catalyses the reaction 4-phospho-D-erythronate + NAD(+) = (R)-3-hydroxy-2-oxo-4-phosphooxybutanoate + NADH + H(+). It participates in cofactor biosynthesis; pyridoxine 5'-phosphate biosynthesis; pyridoxine 5'-phosphate from D-erythrose 4-phosphate: step 2/5. Its function is as follows. Catalyzes the oxidation of erythronate-4-phosphate to 3-hydroxy-2-oxo-4-phosphonooxybutanoate. The chain is Erythronate-4-phosphate dehydrogenase from Escherichia coli O127:H6 (strain E2348/69 / EPEC).